A 354-amino-acid chain; its full sequence is Probable calcium-binding protein CML50 (354 aa).

2 stretches are compositionally biased toward low complexity: residues 1–10 and 28–71; these read MSGYPPTSQG and YSSG…SSYG. A disordered region spans residues 1–159; that stretch reads MSGYPPTSQG…PASSGHGGGY (159 aa). Residues 72–81 are compositionally biased toward pro residues; the sequence is APPPSAPYAP. Residues 106-117 show a composition bias toward low complexity; sequence GSSDYGSYGAGP. 2 EF-hand domains span residues 183 to 218 and 249 to 284; these read GTDP…YQQR and YSLQ…LGFS. Aspartate 196, aspartate 198, serine 200, glutamate 207, aspartate 262, aspartate 264, serine 266, arginine 268, and glutamate 273 together coordinate Ca(2+).

Potential calcium sensor. The protein is Probable calcium-binding protein CML50 (CML50) of Arabidopsis thaliana (Mouse-ear cress).